Here is a 260-residue protein sequence, read N- to C-terminus: Hydroxyethylthiazole kinase 1 (260 aa).

Met-39 provides a ligand contact to substrate. Residues Arg-115 and Thr-160 each contribute to the ATP site. Gly-187 is a substrate binding site.

Belongs to the Thz kinase family. It depends on Mg(2+) as a cofactor.

The catalysed reaction is 5-(2-hydroxyethyl)-4-methylthiazole + ATP = 4-methyl-5-(2-phosphooxyethyl)-thiazole + ADP + H(+). It participates in cofactor biosynthesis; thiamine diphosphate biosynthesis; 4-methyl-5-(2-phosphoethyl)-thiazole from 5-(2-hydroxyethyl)-4-methylthiazole: step 1/1. Its function is as follows. Catalyzes the phosphorylation of the hydroxyl group of 4-methyl-5-beta-hydroxyethylthiazole (THZ). This chain is Hydroxyethylthiazole kinase 1, found in Streptococcus pneumoniae (strain 70585).